The sequence spans 542 residues: Protein DETOXIFICATION 34 (542 aa).

12 consecutive transmembrane segments (helical) span residues 97-117, 127-147, 176-196, 204-224, 240-260, 272-292, 316-336, 344-364, 390-410, 435-455, 462-482, and 491-511; these read APIA…SIFV, AVAI…LGMA, ILLG…PLLI, IAEI…ALAI, IMAW…YLFI, AAFD…VVGW, FASA…IVLT, IAVG…MLFI, VIVT…VILI, LLGI…VAVG, VAYI…FLLG, and GIWI…LYMI.

Belongs to the multi antimicrobial extrusion (MATE) (TC 2.A.66.1) family.

It is found in the membrane. This chain is Protein DETOXIFICATION 34, found in Arabidopsis thaliana (Mouse-ear cress).